Here is a 188-residue protein sequence, read N- to C-terminus: Shikimate kinase (188 aa).

21–26 (GAGKTT) provides a ligand contact to ATP. T25 serves as a coordination point for Mg(2+). Substrate-binding residues include D43, R67, and G90. ATP is bound at residue R130. R148 is a binding site for substrate.

This sequence belongs to the shikimate kinase family. As to quaternary structure, monomer. The cofactor is Mg(2+).

The protein resides in the cytoplasm. It carries out the reaction shikimate + ATP = 3-phosphoshikimate + ADP + H(+). It functions in the pathway metabolic intermediate biosynthesis; chorismate biosynthesis; chorismate from D-erythrose 4-phosphate and phosphoenolpyruvate: step 5/7. Functionally, catalyzes the specific phosphorylation of the 3-hydroxyl group of shikimic acid using ATP as a cosubstrate. The sequence is that of Shikimate kinase from Geobacillus kaustophilus (strain HTA426).